The following is a 357-amino-acid chain: Sorbitol dehydrogenase (357 aa).

At alanine 2 the chain carries N-acetylalanine. Cysteine 45 is a Zn(2+) binding site. A substrate-binding site is contributed by tyrosine 51. Residues histidine 70 and glutamate 71 each contribute to the Zn(2+) site. Glutamate 156 contributes to the substrate binding site. At serine 169 the chain carries Phosphoserine. NAD(+) contacts are provided by residues valine 184, aspartate 204, arginine 209, 273–275 (VGM), and 297–299 (VFR). Positions 299 and 300 each coordinate substrate.

This sequence belongs to the zinc-containing alcohol dehydrogenase family. In terms of assembly, homotetramer. Zn(2+) is required as a cofactor. Testis has the highest level of expression, followed by kidney, liver, and lung. Low levels of expression are also observed in lens, brain, and skeletal muscle. Expressed in sperm flagellum and very low expression in the sperm head.

The protein resides in the mitochondrion membrane. Its subcellular location is the cell projection. The protein localises to the cilium. It localises to the flagellum. It carries out the reaction keto-D-fructose + NADH + H(+) = D-sorbitol + NAD(+). The catalysed reaction is xylitol + NAD(+) = D-xylulose + NADH + H(+). It catalyses the reaction L-iditol + NAD(+) = keto-L-sorbose + NADH + H(+). Its activity is regulated as follows. Inhibited in vitro by p-hydroxymercuribenzoate, EDTA, l,l0-phenanthroline and N-ethylmaleimide. In terms of biological role, polyol dehydrogenase that catalyzes the reversible NAD(+)-dependent oxidation of various sugar alcohols. Is active with D-sorbitol (D-glucitol) leading to the C2-oxidized product D-fructose. Is a key enzyme in the polyol pathway that interconverts glucose and fructose via sorbitol, which constitutes an important alternate route for glucose metabolism. May play a role in sperm motility by using sorbitol as an alternative energy source for sperm motility and protein tyrosine phosphorylation. Has no activity on ethanol. Cannot use NADP(+) as the electron acceptor. In Mus musculus (Mouse), this protein is Sorbitol dehydrogenase (Sord).